We begin with the raw amino-acid sequence, 206 residues long: Max dimerization protein 3 (206 aa).

Residues isoleucine 8–alanine 25 are interaction with SIN3A and SIN3B. Disordered stretches follow at residues tyrosine 29–glutamate 66 and lysine 122–leucine 171. The 53-residue stretch at serine 57–leucine 109 folds into the bHLH domain. The segment covering lysine 126 to glutamine 138 has biased composition (low complexity). Positions alanine 143–serine 153 are enriched in basic and acidic residues.

Efficient DNA binding requires dimerization with another bHLH protein. Binds DNA as a heterodimer with MAX. Interacts with SIN3A AND SIN3B. Interacts with RNF17. Expressed only in the proliferating areas of the testis and thymus.

Its subcellular location is the nucleus. In terms of biological role, transcriptional repressor. Binds with MAX to form a sequence-specific DNA-binding protein complex which recognizes the core sequence 5'-CAC[GA]TG-3'. Antagonizes MYC transcriptional activity by competing for MAX and suppresses MYC dependent cell transformation. In Mus musculus (Mouse), this protein is Max dimerization protein 3 (Mxd3).